Consider the following 251-residue polypeptide: HTH-type transcriptional regulator UlaR (251 aa).

One can recognise an HTH deoR-type domain in the interval 3–58; that stretch reads EAQRHQILLEMLAQLGFVTVEKVVERLGISPATARRDINKLDESGKLKKVRNGAEA. Positions 20 to 39 form a DNA-binding region, H-T-H motif; it reads VTVEKVVERLGISPATARRD.

The protein resides in the cytoplasm. Represses ulaG and the ulaABCDEF operon. This Escherichia coli (strain SMS-3-5 / SECEC) protein is HTH-type transcriptional regulator UlaR.